Consider the following 111-residue polypeptide: Universal stress protein B (111 aa).

The next 2 helical transmembrane spans lie at 1–21 (MIST…NMAR) and 90–110 (FILT…LLIW).

It belongs to the universal stress protein B family.

The protein localises to the cell inner membrane. This chain is Universal stress protein B, found in Escherichia fergusonii (strain ATCC 35469 / DSM 13698 / CCUG 18766 / IAM 14443 / JCM 21226 / LMG 7866 / NBRC 102419 / NCTC 12128 / CDC 0568-73).